A 99-amino-acid polypeptide reads, in one-letter code: Sarcosine oxidase subunit delta (99 aa).

Positions 6, 9, 59, and 63 each coordinate Zn(2+).

This sequence belongs to the SoxD family. Heterotetramer composed of subunits alpha (SoxA), beta (SoxB), gamma (SoxG) and delta (SoxD).

The protein localises to the cytoplasm. The catalysed reaction is sarcosine + (6S)-5,6,7,8-tetrahydrofolate + O2 = (6R)-5,10-methylene-5,6,7,8-tetrahydrofolate + glycine + H2O2. It catalyses the reaction sarcosine + O2 + H2O = formaldehyde + glycine + H2O2. With respect to regulation, inhibited by Zn(2+), Cu(2+), Cd(2+), Hg(2+), Ag(+), p-chloromercuribenzoate (p-CMB), iodoacetamide, N-ethylmaleimide, CN(-), o-phenanthroline and sodium lauryl sulfate. In terms of biological role, in the presence of tetrahydrofolate, catalyzes the oxidative demethylation of sarcosine to yield glycine, 5,10-methylenetetrahydrofolate and hydrogen peroxide. In the absence of tetrahydrofolate, catalyzes the oxidative demethylation of sarcosine to yield glycine, formaldehyde and hydrogen peroxide. Can also use N-methyl-L-alanine and N-ethyl-L-glycine. Is very specific for oxygen as an acceptor. The chain is Sarcosine oxidase subunit delta from Corynebacterium sp. (strain U-96).